The sequence spans 294 residues: Nucleotide-binding protein Cbei_4857 (294 aa).

An ATP-binding site is contributed by 8–15; sequence GLSGAGKT. Residue 59–62 participates in GTP binding; the sequence is DIRG.

Belongs to the RapZ-like family.

Displays ATPase and GTPase activities. This is Nucleotide-binding protein Cbei_4857 from Clostridium beijerinckii (strain ATCC 51743 / NCIMB 8052) (Clostridium acetobutylicum).